The chain runs to 432 residues: Glutamyl-tRNA reductase (432 aa).

Substrate-binding positions include 55 to 58 (TCNR), serine 114, 119 to 121 (ETQ), and glutamine 125. The active-site Nucleophile is the cysteine 56. 194-199 (GAGEMI) lines the NADP(+) pocket.

The protein belongs to the glutamyl-tRNA reductase family. Homodimer.

It carries out the reaction (S)-4-amino-5-oxopentanoate + tRNA(Glu) + NADP(+) = L-glutamyl-tRNA(Glu) + NADPH + H(+). It functions in the pathway porphyrin-containing compound metabolism; protoporphyrin-IX biosynthesis; 5-aminolevulinate from L-glutamyl-tRNA(Glu): step 1/2. Functionally, catalyzes the NADPH-dependent reduction of glutamyl-tRNA(Glu) to glutamate 1-semialdehyde (GSA). The chain is Glutamyl-tRNA reductase from Burkholderia lata (strain ATCC 17760 / DSM 23089 / LMG 22485 / NCIMB 9086 / R18194 / 383).